The primary structure comprises 843 residues: MPLSYPHFRKLLLLDDEAGLLEEELPRLADEGLNRRVAEDLNLQLPNVSIPWTHKVGNFTGLYSSTVPTFNPDWLTPSFPDIHLHQDLIHKCEQFVGPLTKNELRRLKLVMPSRFFPKVTKYFPMEKGIKPYYPDNVVNHYFKTRHYLHTLWKAGILYKRESTRSASFCGSPYSWEQELQHGSTSINDTKGHGTESLCTQSSGILSRPSAGSSIQGKFQQSRLGLQQKQGQLANGKQGRSGRIRSWVHTPTRWPAGVEPTGTGCAYNIASRSASCFHQSAVREKTNPSLSTSKRHSSTGHAVELNPVPPGSVRSEGKGSVLSCWWLQFRDTEPCSDYCLSHIINLLEDWGPCYEHGQHHIRTPRTPARVTGGVFLVDKNPHNTTESRLVVDFSQFSRGNTRVSWPKFAVPNLQSLTNLLSSNLSWLSLDVSAAFYHLPLHPAAMPHLLVGSSGLSRYVARLSSTSRIHDHQHGTMQNLHNSCSRNLYVSLLLLFKTFGRKLHLYSHPIILGFRKIPMGVGLSPFLLAQFTSAICSVVRRAFPHCLAFSYMDDLVLGAKSVQHLESLYTAVTNFLLSVGIHLNTSKTKRWGYTLNFMGYVIGSWGSLPQDHIVQKIKACFRKLPVNRPIDWKVCQRIVGLLGFAAPFTQCGYPALMPLYACITAKQAFVFSPTYKAFLCQQYMHLYPVARQRPGLCQVFADATPTGWGLAIGHQRMRGTFVAPLPIHTAELLAACFARSRSGAKLIGTDNSVVLSRKYTSFPWLLGCAANWILRGTSFVYVPSALNPADDPSRGRLGLYRPLLRLPFQPTTGRTSLYAASPSVPSHLPDRVHFASPLHVAWRPP.

The segment at 1-177 (MPLSYPHFRK…FCGSPYSWEQ (177 aa)) is terminal protein domain (TP). The spacer stretch occupies residues 178 to 346 (ELQHGSTSIN…YCLSHIINLL (169 aa)). Disordered stretches follow at residues 180–221 (QHGS…FQQS) and 282–313 (REKTNPSLSTSKRHSSTGHAVELNPVPPGSVR). Over residues 196 to 221 (SLCTQSSGILSRPSAGSSIQGKFQQS) the composition is skewed to polar residues. Residues 347–690 (EDWGPCYEHG…YMHLYPVARQ (344 aa)) form a polymerase/reverse transcriptase domain (RT) region. One can recognise a Reverse transcriptase domain in the interval 357-600 (QHHIRTPRTP…YTLNFMGYVI (244 aa)). Residues aspartate 429, aspartate 551, and aspartate 552 each coordinate Mg(2+).

The protein belongs to the hepadnaviridae P protein family.

The catalysed reaction is DNA(n) + a 2'-deoxyribonucleoside 5'-triphosphate = DNA(n+1) + diphosphate. The enzyme catalyses Endonucleolytic cleavage to 5'-phosphomonoester.. With respect to regulation, activated by host HSP70 and HSP40 in vitro to be able to bind the epsilon loop of the pgRNA. Because deletion of the RNase H region renders the protein partly chaperone-independent, the chaperones may be needed indirectly to relieve occlusion of the RNA-binding site by this domain. Inhibited by several reverse-transcriptase inhibitors: Lamivudine, Adefovir and Entecavir. Multifunctional enzyme that converts the viral RNA genome into dsDNA in viral cytoplasmic capsids. This enzyme displays a DNA polymerase activity that can copy either DNA or RNA templates, and a ribonuclease H (RNase H) activity that cleaves the RNA strand of RNA-DNA heteroduplexes in a partially processive 3'- to 5'-endonucleasic mode. Neo-synthesized pregenomic RNA (pgRNA) are encapsidated together with the P protein, and reverse-transcribed inside the nucleocapsid. Initiation of reverse-transcription occurs first by binding the epsilon loop on the pgRNA genome, and is initiated by protein priming, thereby the 5'-end of (-)DNA is covalently linked to P protein. Partial (+)DNA is synthesized from the (-)DNA template and generates the relaxed circular DNA (RC-DNA) genome. After budding and infection, the RC-DNA migrates in the nucleus, and is converted into a plasmid-like covalently closed circular DNA (cccDNA). The activity of P protein does not seem to be necessary for cccDNA generation, and is presumably released from (+)DNA by host nuclear DNA repair machinery. This chain is Protein P, found in Homo sapiens (Human).